The primary structure comprises 287 residues: Elongation factor Ts (287 aa).

An involved in Mg(2+) ion dislocation from EF-Tu region spans residues 80–83 (TDFL).

This sequence belongs to the EF-Ts family.

Its subcellular location is the cytoplasm. Functionally, associates with the EF-Tu.GDP complex and induces the exchange of GDP to GTP. It remains bound to the aminoacyl-tRNA.EF-Tu.GTP complex up to the GTP hydrolysis stage on the ribosome. The chain is Elongation factor Ts from Pseudomonas fluorescens (strain SBW25).